The chain runs to 425 residues: Serine--tRNA ligase (425 aa).

Residue 226–228 participates in L-serine binding; the sequence is TSE. Residues 257–259 and V273 each bind ATP; that span reads RRE. E280 contacts L-serine. 344 to 347 contacts ATP; sequence ELTS. An L-serine-binding site is contributed by T382.

The protein belongs to the class-II aminoacyl-tRNA synthetase family. Type-1 seryl-tRNA synthetase subfamily. As to quaternary structure, homodimer. The tRNA molecule binds across the dimer.

The protein localises to the cytoplasm. The catalysed reaction is tRNA(Ser) + L-serine + ATP = L-seryl-tRNA(Ser) + AMP + diphosphate + H(+). It carries out the reaction tRNA(Sec) + L-serine + ATP = L-seryl-tRNA(Sec) + AMP + diphosphate + H(+). It participates in aminoacyl-tRNA biosynthesis; selenocysteinyl-tRNA(Sec) biosynthesis; L-seryl-tRNA(Sec) from L-serine and tRNA(Sec): step 1/1. Its function is as follows. Catalyzes the attachment of serine to tRNA(Ser). Is also able to aminoacylate tRNA(Sec) with serine, to form the misacylated tRNA L-seryl-tRNA(Sec), which will be further converted into selenocysteinyl-tRNA(Sec). The polypeptide is Serine--tRNA ligase (Mycobacterium avium (strain 104)).